The primary structure comprises 60 residues: Cytotoxin 1 (60 aa).

4 cysteine pairs are disulfide-bonded: Cys-3–Cys-21, Cys-14–Cys-38, Cys-42–Cys-53, and Cys-54–Cys-59.

Belongs to the three-finger toxin family. Short-chain subfamily. Type IA cytotoxin sub-subfamily. Monomer in solution; Homodimer and oligomer in the presence of negatively charged lipids forming a pore with a size ranging between 20 and 30 Angstroms. In terms of tissue distribution, expressed by the venom gland.

The protein localises to the secreted. Its subcellular location is the target cell membrane. Shows cytolytic activity on many different cells by forming pore in lipid membranes. In vivo, increases heart rate or kills the animal by cardiac arrest. In addition, it binds to heparin with high affinity, interacts with Kv channel-interacting protein 1 (KCNIP1) in a calcium-independent manner, and binds to integrin alpha-V/beta-3 (ITGAV/ITGB3) with moderate affinity. This Naja naja (Indian cobra) protein is Cytotoxin 1.